The sequence spans 238 residues: MTQALPRVVTIRELLEAGAHFGHPTNRWNPKMKPYIFTARNGIHIIDLQKTVTGLSRAYQFITELTARGEKVLFVGTKKQAQEAVMEEAVRSGQFYINQRWLGGTLTNFATIKRRLKLLSDLEEQRDRGDFARLTKAEAAKLEEKIVRLNRVFAGLKGMDRLPGAVFIIDPRKEELAVREAVKEGIPIVAMVDTNCDPDPIDYVIPCNDDAIRGIRLMAGKIADAAIEGTRRREMSQE.

It belongs to the universal ribosomal protein uS2 family.

This Chloroflexus aurantiacus (strain ATCC 29366 / DSM 635 / J-10-fl) protein is Small ribosomal subunit protein uS2.